The sequence spans 257 residues: Imidazole glycerol phosphate synthase subunit HisF (257 aa).

Catalysis depends on residues aspartate 12 and aspartate 131.

This sequence belongs to the HisA/HisF family. As to quaternary structure, heterodimer of HisH and HisF.

The protein localises to the cytoplasm. It carries out the reaction 5-[(5-phospho-1-deoxy-D-ribulos-1-ylimino)methylamino]-1-(5-phospho-beta-D-ribosyl)imidazole-4-carboxamide + L-glutamine = D-erythro-1-(imidazol-4-yl)glycerol 3-phosphate + 5-amino-1-(5-phospho-beta-D-ribosyl)imidazole-4-carboxamide + L-glutamate + H(+). It functions in the pathway amino-acid biosynthesis; L-histidine biosynthesis; L-histidine from 5-phospho-alpha-D-ribose 1-diphosphate: step 5/9. In terms of biological role, IGPS catalyzes the conversion of PRFAR and glutamine to IGP, AICAR and glutamate. The HisF subunit catalyzes the cyclization activity that produces IGP and AICAR from PRFAR using the ammonia provided by the HisH subunit. This is Imidazole glycerol phosphate synthase subunit HisF from Burkholderia thailandensis (strain ATCC 700388 / DSM 13276 / CCUG 48851 / CIP 106301 / E264).